An 89-amino-acid chain; its full sequence is Small ribosomal subunit protein uS15 (89 aa).

The protein belongs to the universal ribosomal protein uS15 family. Part of the 30S ribosomal subunit. Forms a bridge to the 50S subunit in the 70S ribosome, contacting the 23S rRNA.

In terms of biological role, one of the primary rRNA binding proteins, it binds directly to 16S rRNA where it helps nucleate assembly of the platform of the 30S subunit by binding and bridging several RNA helices of the 16S rRNA. Forms an intersubunit bridge (bridge B4) with the 23S rRNA of the 50S subunit in the ribosome. The chain is Small ribosomal subunit protein uS15 from Lactococcus lactis subsp. lactis (strain IL1403) (Streptococcus lactis).